The chain runs to 402 residues: Plasminogen activator inhibitor 1 (402 aa).

The N-terminal stretch at 1–23 (MRMSLVFACLAMGLALTFAEGSA) is a signal peptide. N232, N288, and N352 each carry an N-linked (GlcNAc...) asparagine glycan.

The protein belongs to the serpin family. Forms a heterodimer with TMPRSS7. Interacts with VTN. Binds LRP1B; binding is followed by internalization and degradation. Interacts with PPP1CB. In complex with PLAU/uPA, interacts with PLAUR/uPAR. Interacts with SORL1 and LRP1, either alone or in complex with PLAU; these interactions are abolished in the presence of LRPAP1/RAP. The ternary complex composed of PLAUR-PLAU-PAI1 also interacts with SORL1. Interacts with PLAT/tPA. Also interacts with SORL1, when complexed to PLAT/tPA.

It localises to the secreted. Serine protease inhibitor. Inhibits TMPRSS7. Is a primary inhibitor of tissue-type plasminogen activator (PLAT) and urokinase-type plasminogen activator (PLAU). As PLAT inhibitor, it is required for fibrinolysis down-regulation and is responsible for the controlled degradation of blood clots. As PLAU inhibitor, it is involved in the regulation of cell adhesion and spreading. Acts as a regulator of cell migration, independently of its role as protease inhibitor. It is required for stimulation of keratinocyte migration during cutaneous injury repair. It is involved in cellular and replicative senescence. Plays a role in alveolar type 2 cells senescence in the lung. Is involved in the regulation of cementogenic differentiation of periodontal ligament stem cells, and regulates odontoblast differentiation and dentin formation during odontogenesis. The chain is Plasminogen activator inhibitor 1 (SERPINE1) from Sus scrofa (Pig).